Reading from the N-terminus, the 363-residue chain is Cobalt-precorrin-5B C(1)-methyltransferase (363 aa).

It belongs to the CbiD family.

The catalysed reaction is Co-precorrin-5B + S-adenosyl-L-methionine = Co-precorrin-6A + S-adenosyl-L-homocysteine. It functions in the pathway cofactor biosynthesis; adenosylcobalamin biosynthesis; cob(II)yrinate a,c-diamide from sirohydrochlorin (anaerobic route): step 6/10. Catalyzes the methylation of C-1 in cobalt-precorrin-5B to form cobalt-precorrin-6A. This is Cobalt-precorrin-5B C(1)-methyltransferase from Burkholderia mallei (strain ATCC 23344).